The chain runs to 349 residues: [LysW]-L-2-aminoadipate/[LysW]-L-glutamate phosphate reductase (349 aa).

Residue 10–13 (SGYT) participates in NADP(+) binding. The active site involves cysteine 150. Asparagine 316 provides a ligand contact to NADP(+).

Belongs to the NAGSA dehydrogenase family. Type 1 subfamily. LysY sub-subfamily.

It localises to the cytoplasm. It catalyses the reaction [amino-group carrier protein]-C-terminal-N-(1-carboxy-5-oxopentan-1-yl)-L-glutamine + phosphate + NADP(+) = [amino-group carrier protein]-C-terminal-N-(1-carboxy-5-phosphooxy-5-oxopentan-1-yl)-L-glutamine + NADPH + H(+). The catalysed reaction is [amino-group carrier protein]-C-terminal-gamma-(L-glutamyl-5-semialdehyde)-L-glutamate + phosphate + NADP(+) = [amino-group carrier protein]-C-terminal-gamma-(5-phospho-L-glutamyl)-L-glutamate + NADPH + H(+). It participates in amino-acid biosynthesis; L-lysine biosynthesis via AAA pathway; L-lysine from L-alpha-aminoadipate (Thermus route): step 3/5. The protein operates within amino-acid biosynthesis; L-arginine biosynthesis. Its function is as follows. Involved in both the arginine and lysine biosynthetic pathways. The sequence is that of [LysW]-L-2-aminoadipate/[LysW]-L-glutamate phosphate reductase from Sulfurisphaera tokodaii (strain DSM 16993 / JCM 10545 / NBRC 100140 / 7) (Sulfolobus tokodaii).